Consider the following 263-residue polypeptide: MTAARAGALGSVLCVLTGASRGFGRTLAHELCPRVLPGSTLLLVSRTEEALKGLAEELGHEFPGVRVRWAAADLSTTEGVSATVRAARELQAGTAHRLLIINNAGSIGDVSKMFVDFSAPEEVTEYMKFNVSSPLCLTASLLKTFPRRPDLQRLVVNVSSLAALQPYKSWVLYCSGKAARDMMFRVLAEEEDDVRVLSYAPGPLDTDMHEVACTQTADPELRRAIMDRKEKGNMVDIRVSANKMLDLLEADAYKSGDHIDFYD.

Residues 18-24 (GASRGFG), 46-47 (RT), and 73-74 (DL) each bind NADP(+). Substrate contacts are provided by residues 160–161 (SL) and Y173. Residue K177 coordinates NADP(+). G202 lines the substrate pocket. 204-209 (LDTDMH) lines the NADP(+) pocket. D260 is a substrate binding site.

It belongs to the sepiapterin reductase family. Homodimer.

It is found in the cytoplasm. The catalysed reaction is L-erythro-7,8-dihydrobiopterin + NADP(+) = L-sepiapterin + NADPH + H(+). It carries out the reaction (6R)-L-erythro-5,6,7,8-tetrahydrobiopterin + 2 NADP(+) = 6-pyruvoyl-5,6,7,8-tetrahydropterin + 2 NADPH + 2 H(+). Its function is as follows. Catalyzes the final one or two reductions in tetra-hydrobiopterin biosynthesis to form 5,6,7,8-tetrahydrobiopterin. The chain is Sepiapterin reductase (spr) from Xenopus laevis (African clawed frog).